An 82-amino-acid chain; its full sequence is Defensin-like protein 75 (82 aa).

The N-terminal stretch at 1-26 (MAKIKSLDVITVAIILLLVIADQATA) is a signal peptide. 4 disulfides stabilise this stretch: cysteine 33–cysteine 66, cysteine 37–cysteine 55, cysteine 41–cysteine 64, and cysteine 45–cysteine 65.

This sequence belongs to the DEFL family.

The protein resides in the secreted. This chain is Defensin-like protein 75 (LCR45), found in Arabidopsis thaliana (Mouse-ear cress).